The sequence spans 940 residues: Leucine--tRNA ligase, mitochondrial (940 aa).

The short motif at 54 to 64 is the 'HIGH' region element; that stretch reads PYPSGALHMGH. Positions 638–642 match the 'KMSKS' region motif; it reads TINKL. Lys-641 is a binding site for ATP. The disordered stretch occupies residues 724–744; that stretch reads KEQHQHQQQQHQQPLPSSEFN.

Belongs to the class-I aminoacyl-tRNA synthetase family.

The protein resides in the mitochondrion. The enzyme catalyses tRNA(Leu) + L-leucine + ATP = L-leucyl-tRNA(Leu) + AMP + diphosphate. In Dictyostelium discoideum (Social amoeba), this protein is Leucine--tRNA ligase, mitochondrial (mleuS).